Consider the following 83-residue polypeptide: Kunitz serine protease inhibitor Pr-mulgin 3 (83 aa).

A signal peptide spans 1–24 (MSSGGLFLLLGLLTLWEVLTPVSS). A BPTI/Kunitz inhibitor domain is found at 31-81 (CELPADSGSCKGNFQAFYYHPVHRTCLEFIYGGCEGNDNNFKTIDECKRTC). 3 disulfide bridges follow: C31–C81, C40–C64, and C56–C77.

The protein belongs to the venom Kunitz-type family. Expressed by the venom gland.

The protein resides in the secreted. Its function is as follows. Serine protease inhibitor that acts against trypsin (EC(50)=10 nM, Ki=5nM), and plasmin (EC(50)=200 nM, Ki=100 nM). This Pseudechis rossignolii (Papuan pigmy mulga snake) protein is Kunitz serine protease inhibitor Pr-mulgin 3.